The chain runs to 438 residues: MKPLHYTASALALGLALMGNAQAVTTIPFWHSMEGELGKEVDSLAQRFNAENPDYKIVPTYKGNYEQNLSAGIAAFRTGNAPAILQVYEVGTATMMASKAIKPVYDVFKEAGIQFDESQFVPTVSGYYSDSKTGHLLSQPFNSSTPVLYYNKDAFKKAGLDPEQPPKTWQDLADYAAKLKASGMKCGYASGWQGWIQLENFSAWNGLPFASKNNGFDGTDAVLEFNKPEQVKHIAMLEEMNKKGDFSYVGRKDESTEKFYNGDCAMTTASSGSLANIREYAKFNYGVGMMPYDADAKDAPQNAIIGGASLWVMQGKDKETYTGVAKFLDFLAKPENAAEWHQKTGYLPITKAAYDLTREQGFYEKNPGADTATRQMLNKPPLPFTKGLRLGNMPQIRVIVDEELESVWTGKKTPQQALDTAVERGNQLLRRFEKSTKS.

Positions 1–23 are cleaved as a signal peptide; that stretch reads MKPLHYTASALALGLALMGNAQA. Residues Tyr65, Glu89, Ser144, Ser270, Gly307, Tyr346, and Arg397 each contribute to the sn-glycerol 3-phosphate site.

Belongs to the bacterial solute-binding protein 1 family. The complex is composed of two ATP-binding proteins (UgpC), two transmembrane proteins (UgpA and UgpE) and a solute-binding protein (UgpB).

Its subcellular location is the periplasm. Functionally, part of the ABC transporter complex UgpBAEC involved in sn-glycerol-3-phosphate (G3P) import. Binds G3P. This Escherichia coli O157:H7 protein is sn-glycerol-3-phosphate-binding periplasmic protein UgpB (ugpB).